The primary structure comprises 364 residues: Protein Wnt-6 (364 aa).

A signal peptide spans 1 to 23; it reads MLPPVPSRLGLLLLLLCPAHVDG. Disulfide bonds link Cys75/Cys86, Cys123/Cys131, Cys133/Cys171, Cys221/Cys235, Cys223/Cys230, Cys293/Cys324, Cys309/Cys319, Cys323/Cys363, Cys339/Cys354, Cys341/Cys351, and Cys346/Cys347. An N-linked (GlcNAc...) asparagine glycan is attached at Asn85. Residues 140 to 162 form a disordered region; it reads APPRPSGLLGTPGPPGPTGSPDA. Ser227 is lipidated: O-palmitoleoyl serine; by PORCN. Residue Asn310 is glycosylated (N-linked (GlcNAc...) asparagine).

The protein belongs to the Wnt family. In terms of assembly, interacts with PORCN. In terms of processing, palmitoleoylation is required for efficient binding to frizzled receptors. Depalmitoleoylation leads to Wnt signaling pathway inhibition. Detected in ileum, colon and stomach (at protein level).

It is found in the secreted. The protein resides in the extracellular space. It localises to the extracellular matrix. Ligand for members of the frizzled family of seven transmembrane receptors. Probable developmental protein. May be a signaling molecule which affects the development of discrete regions of tissues. Is likely to signal over only few cell diameters. The protein is Protein Wnt-6 (Wnt6) of Mus musculus (Mouse).